Consider the following 266-residue polypeptide: DNA-directed RNA polymerase subunit Rpo3 (266 aa).

Residues Cys-205, Cys-208, and Cys-211 each coordinate [3Fe-4S] cluster.

The protein belongs to the archaeal Rpo3/eukaryotic RPB3 RNA polymerase subunit family. As to quaternary structure, part of the RNA polymerase complex. The cofactor is [3Fe-4S] cluster.

It localises to the cytoplasm. The enzyme catalyses RNA(n) + a ribonucleoside 5'-triphosphate = RNA(n+1) + diphosphate. In terms of biological role, DNA-dependent RNA polymerase (RNAP) catalyzes the transcription of DNA into RNA using the four ribonucleoside triphosphates as substrates. This Methanosarcina acetivorans (strain ATCC 35395 / DSM 2834 / JCM 12185 / C2A) protein is DNA-directed RNA polymerase subunit Rpo3.